We begin with the raw amino-acid sequence, 279 residues long: Urease accessory protein UreD (279 aa).

Belongs to the UreD family. In terms of assembly, ureD, UreF and UreG form a complex that acts as a GTP-hydrolysis-dependent molecular chaperone, activating the urease apoprotein by helping to assemble the nickel containing metallocenter of UreC. The UreE protein probably delivers the nickel.

The protein localises to the cytoplasm. Required for maturation of urease via the functional incorporation of the urease nickel metallocenter. The chain is Urease accessory protein UreD from Streptococcus salivarius (strain 57.I).